The sequence spans 226 residues: ATP synthase subunit a (226 aa).

The next 6 membrane-spanning stretches (helical) occupy residues 22-42, 73-93, 102-122, 135-155, 173-193, and 202-222; these read SMNW…FWLI, IIIF…SLIP, LLLN…YLIY, LNSP…SLII, LILT…PINL, and LEIF…ILYF.

It belongs to the ATPase A chain family. F-type ATPases have 2 components, CF(1) - the catalytic core - and CF(0) - the membrane proton channel. CF(1) has five subunits: alpha(3), beta(3), gamma(1), delta(1), epsilon(1). CF(0) has three main subunits: a, b and c.

It localises to the mitochondrion inner membrane. In terms of biological role, mitochondrial membrane ATP synthase (F(1)F(0) ATP synthase or Complex V) produces ATP from ADP in the presence of a proton gradient across the membrane which is generated by electron transport complexes of the respiratory chain. F-type ATPases consist of two structural domains, F(1) - containing the extramembraneous catalytic core and F(0) - containing the membrane proton channel, linked together by a central stalk and a peripheral stalk. During catalysis, ATP synthesis in the catalytic domain of F(1) is coupled via a rotary mechanism of the central stalk subunits to proton translocation. Key component of the proton channel; it may play a direct role in the translocation of protons across the membrane. In Apis mellifera ligustica (Common honeybee), this protein is ATP synthase subunit a (ATP6).